Reading from the N-terminus, the 348-residue chain is Inositol 2-dehydrogenase/D-chiro-inositol 3-dehydrogenase (348 aa).

This sequence belongs to the Gfo/Idh/MocA family. As to quaternary structure, homotetramer.

The enzyme catalyses myo-inositol + NAD(+) = scyllo-inosose + NADH + H(+). It carries out the reaction 1D-chiro-inositol + NAD(+) = scyllo-inosine + NADH + H(+). Its pathway is polyol metabolism; myo-inositol degradation into acetyl-CoA; acetyl-CoA from myo-inositol: step 1/7. Its function is as follows. Involved in the oxidation of myo-inositol (MI) and D-chiro-inositol (DCI) to 2-keto-myo-inositol (2KMI or 2-inosose) and 1-keto-D-chiro-inositol (1KDCI), respectively. The sequence is that of Inositol 2-dehydrogenase/D-chiro-inositol 3-dehydrogenase from Halalkalibacterium halodurans (strain ATCC BAA-125 / DSM 18197 / FERM 7344 / JCM 9153 / C-125) (Bacillus halodurans).